The primary structure comprises 484 residues: tRNA sulfurtransferase (484 aa).

One can recognise a THUMP domain in the interval 63-167; it reads QAFGERLACI…RDNLYMVTKR (105 aa). ATP contacts are provided by residues 185–186, lysine 267, glycine 289, and glutamine 298; that span reads LI. Cysteine 346 and cysteine 458 are disulfide-bonded. Residues 406–484 form the Rhodanese domain; sequence IDTNQVVIDI…GYTNVKVYRP (79 aa). Cysteine 458 serves as the catalytic Cysteine persulfide intermediate.

Belongs to the ThiI family.

The protein resides in the cytoplasm. It carries out the reaction [ThiI sulfur-carrier protein]-S-sulfanyl-L-cysteine + a uridine in tRNA + 2 reduced [2Fe-2S]-[ferredoxin] + ATP + H(+) = [ThiI sulfur-carrier protein]-L-cysteine + a 4-thiouridine in tRNA + 2 oxidized [2Fe-2S]-[ferredoxin] + AMP + diphosphate. The enzyme catalyses [ThiS sulfur-carrier protein]-C-terminal Gly-Gly-AMP + S-sulfanyl-L-cysteinyl-[cysteine desulfurase] + AH2 = [ThiS sulfur-carrier protein]-C-terminal-Gly-aminoethanethioate + L-cysteinyl-[cysteine desulfurase] + A + AMP + 2 H(+). It participates in cofactor biosynthesis; thiamine diphosphate biosynthesis. Functionally, catalyzes the ATP-dependent transfer of a sulfur to tRNA to produce 4-thiouridine in position 8 of tRNAs, which functions as a near-UV photosensor. Also catalyzes the transfer of sulfur to the sulfur carrier protein ThiS, forming ThiS-thiocarboxylate. This is a step in the synthesis of thiazole, in the thiamine biosynthesis pathway. The sulfur is donated as persulfide by IscS. The polypeptide is tRNA sulfurtransferase (Shewanella baltica (strain OS155 / ATCC BAA-1091)).